The sequence spans 325 residues: Acetyl-coenzyme A carboxylase carboxyl transferase subunit alpha (325 aa).

The region spanning 38–292 is the CoA carboxyltransferase C-terminal domain; the sequence is RLEERLSKLQ…DGILKETLKS (255 aa).

Belongs to the AccA family. In terms of assembly, acetyl-CoA carboxylase is a heterohexamer composed of biotin carboxyl carrier protein (AccB), biotin carboxylase (AccC) and two subunits each of ACCase subunit alpha (AccA) and ACCase subunit beta (AccD).

The protein resides in the cytoplasm. The enzyme catalyses N(6)-carboxybiotinyl-L-lysyl-[protein] + acetyl-CoA = N(6)-biotinyl-L-lysyl-[protein] + malonyl-CoA. It functions in the pathway lipid metabolism; malonyl-CoA biosynthesis; malonyl-CoA from acetyl-CoA: step 1/1. Functionally, component of the acetyl coenzyme A carboxylase (ACC) complex. First, biotin carboxylase catalyzes the carboxylation of biotin on its carrier protein (BCCP) and then the CO(2) group is transferred by the carboxyltransferase to acetyl-CoA to form malonyl-CoA. The protein is Acetyl-coenzyme A carboxylase carboxyl transferase subunit alpha of Bacillus velezensis (strain DSM 23117 / BGSC 10A6 / LMG 26770 / FZB42) (Bacillus amyloliquefaciens subsp. plantarum).